A 204-amino-acid polypeptide reads, in one-letter code: MGGKWSKRRAEGWQTIRERMRRAEPAEPAADGVGAVSRDLARHGAITSSNTNNADIAWLEAQEEGEVGFPVRPQVPLRPMTYKAAVDLSHFLKEKGGLEGLVHSQKRQDILDLWVYHTQGFFPDWQNYTPGPGIRYPLTFGWCYKLVPVEPDEGENNREDNSLLHPANQHGVEDSERQVLVWRFDSRLAFHHVARELHPEYFKN.

A disordered region spans residues 1–33 (MGGKWSKRRAEGWQTIRERMRRAEPAEPAADGV). G2 carries N-myristoyl glycine; by host lipidation. Residue S6 is modified to Phosphoserine; by host. Residues 8–25 (RRAEGWQTIRERMRRAEP) are compositionally biased toward basic and acidic residues. Residues 63–66 (EEGE) are acidic; interacts with host PACS1 and PACS2; stabilizes the interaction of NEF/MHC-I with host AP1M1; necessary for MHC-I internalization. Residues 70-79 (PVRPQVPLRP) are SH3-binding; interaction with Src family tyrosine kinases. A PxxP; stabilizes the interaction of NEF/MHC-I with host AP1M1; necessary for MHC-I internalization motif is present at residues 73–76 (PQVP). Residues 109–125 (DILDLWVYHTQGFFPDW) are mediates dimerization, Nef-PTE1 interaction. Residues 149-179 (VEPDEGENNREDNSLLHPANQHGVEDSERQV) form a binding to ATP6V1H region. The short motif at 163–164 (LL) is the Dileucine internalization motif; necessary for CD4 internalization element. Residues 173 to 174 (ED) carry the Diacidic; necessary for CD4 internalization motif.

It belongs to the lentivirus primate group Nef protein family. In terms of assembly, monomer; cytosolic form. Homodimer; membrane bound form. Interacts with Nef associated p21-activated kinase (PAK2); this interaction activates PAK2. Associates with the Nef-MHC-I-AP1 complex; this complex is required for MHC-I internalization. Interacts (via C-terminus) with host PI3-kinase. Interacts with host PACS1; this interaction seems to be weak. Interacts with host PACS2. Interacts with host LCK and MAPK3; these interactions inhibit the kinase activity of the latter. Interacts with host ATP6V1H; this interaction may play a role in CD4 endocytosis. Associates with the CD4-Nef-AP2 complex; this complex is required for CD4 internalization. Interacts with host AP2 subunit alpha and AP2 subunit sigma2. Interacts with TCR-zeta chain; this interaction up-regulates the Fas ligand (FasL) surface expression. Interacts with host HCK, LYN, and SRC; these interactions activate the Src family kinases. Interacts with MAP3K5; this interaction inhibits the Fas and TNFR-mediated death signals. Interacts with beta-COP and PTE1. Interacts with human RACK1; this increases Nef phosphorylation by PKC. Interacts with TP53; this interaction decreases the half-life of TP53, protecting the infected cell against p53-mediated apoptosis. In terms of processing, the virion-associated Nef proteins are cleaved by the viral protease to release the soluble C-terminal core protein. Nef is probably cleaved concomitantly with viral structural proteins on maturation of virus particles. Post-translationally, myristoylated. Phosphorylated on serine residues, probably by host PKCdelta and theta.

Its subcellular location is the host cell membrane. The protein localises to the virion. It is found in the secreted. It localises to the host Golgi apparatus membrane. Functionally, factor of infectivity and pathogenicity, required for optimal virus replication. Alters numerous pathways of T-lymphocyte function and down-regulates immunity surface molecules in order to evade host defense and increase viral infectivity. Alters the functionality of other immunity cells, like dendritic cells, monocytes/macrophages and NK cells. Its function is as follows. In infected CD4(+) T-lymphocytes, down-regulates the surface MHC-I, mature MHC-II, CD4, CD28, CCR5 and CXCR4 molecules. Mediates internalization and degradation of host CD4 through the interaction of with the cytoplasmic tail of CD4, the recruitment of AP-2 (clathrin adapter protein complex 2), internalization through clathrin coated pits, and subsequent transport to endosomes and lysosomes for degradation. Diverts host MHC-I molecules to the trans-Golgi network-associated endosomal compartments by an endocytic pathway to finally target them for degradation. MHC-I down-regulation may involve AP-1 (clathrin adapter protein complex 1) or possibly Src family kinase-ZAP70/Syk-PI3K cascade recruited by PACS2. In consequence infected cells are masked for immune recognition by cytotoxic T-lymphocytes. Decreasing the number of immune receptors also prevents reinfection by more HIV particles (superinfection). Down-regulates host SERINC3 and SERINC5 thereby excluding these proteins from the viral particles. Virion infectivity is drastically higher when SERINC3 or SERINC5 are excluded from the viral envelope, because these host antiviral proteins impair the membrane fusion event necessary for subsequent virion penetration. Bypasses host T-cell signaling by inducing a transcriptional program nearly identical to that of anti-CD3 cell activation. Interaction with TCR-zeta chain up-regulates the Fas ligand (FasL). Increasing surface FasL molecules and decreasing surface MHC-I molecules on infected CD4(+) cells send attacking cytotoxic CD8+ T-lymphocytes into apoptosis. In terms of biological role, plays a role in optimizing the host cell environment for viral replication without causing cell death by apoptosis. Protects the infected cells from apoptosis in order to keep them alive until the next virus generation is ready to strike. Inhibits the Fas and TNFR-mediated death signals by blocking MAP3K5/ASK1. Decreases the half-life of TP53, protecting the infected cell against p53-mediated apoptosis. Inhibits the apoptotic signals regulated by the Bcl-2 family proteins through the formation of a Nef/PI3-kinase/PAK2 complex that leads to activation of PAK2 and induces phosphorylation of host BAD. Functionally, extracellular Nef protein targets CD4(+) T-lymphocytes for apoptosis by interacting with CXCR4 surface receptors. The protein is Protein Nef of Human immunodeficiency virus type 1 group M subtype B (strain 89.6) (HIV-1).